We begin with the raw amino-acid sequence, 85 residues long: Translation initiation factor IF-1 1 (85 aa).

An S1-like domain is found at 1–72 (MAKEELIEMS…SKGRITFRHL (72 aa)).

The protein belongs to the IF-1 family. As to quaternary structure, component of the 30S ribosomal translation pre-initiation complex which assembles on the 30S ribosome in the order IF-2 and IF-3, IF-1 and N-formylmethionyl-tRNA(fMet); mRNA recruitment can occur at any time during PIC assembly.

It localises to the cytoplasm. Functionally, one of the essential components for the initiation of protein synthesis. Stabilizes the binding of IF-2 and IF-3 on the 30S subunit to which N-formylmethionyl-tRNA(fMet) subsequently binds. Helps modulate mRNA selection, yielding the 30S pre-initiation complex (PIC). Upon addition of the 50S ribosomal subunit IF-1, IF-2 and IF-3 are released leaving the mature 70S translation initiation complex. The protein is Translation initiation factor IF-1 1 of Aromatoleum aromaticum (strain DSM 19018 / LMG 30748 / EbN1) (Azoarcus sp. (strain EbN1)).